Here is a 259-residue protein sequence, read N- to C-terminus: uncharacterized protein (259 aa).

Residues 158-187 (VELHLKIIEEDMKETTKKNKEKKQNSQSQE) adopt a coiled-coil conformation. Positions 172-181 (TTKKNKEKKQ) are enriched in basic and acidic residues. 2 disordered regions span residues 172-197 (TTKKNKEKKQNSQSQEISNSIEMEVS) and 217-240 (PVKKTSSASKSDSDKKNKRQQLSK). Low complexity-rich tracts occupy residues 182–193 (NSQSQEISNSIE) and 217–226 (PVKKTSSASK).

This is an uncharacterized protein from Acanthamoeba polyphaga mimivirus (APMV).